A 1137-amino-acid polypeptide reads, in one-letter code: Receptor-type guanylate cyclase gcy-1 (1137 aa).

Residues 1 to 18 form the signal peptide; the sequence is MQIFTILLLFNIFPSIFV. Residues 19–494 are Extracellular-facing; the sequence is QNLPDTTVAP…CPVSFWEQYK (476 aa). Residues asparagine 219, asparagine 348, asparagine 358, asparagine 384, asparagine 417, and asparagine 451 are each glycosylated (N-linked (GlcNAc...) asparagine). A helical transmembrane segment spans residues 495–515; sequence ILIFVAIAVIVLMVLIMIIGC. The Cytoplasmic portion of the chain corresponds to 516 to 1137; sequence LCVISGKRAE…FKMDTLKVAN (622 aa). A Protein kinase domain is found at 557-826; it reads LQSAPSISTG…ENICSQMKGL (270 aa). Residues 840–871 adopt a coiled-coil conformation; it reads NMLEEYTSTLEEEIEERTKELTLEKKKADILL. A Guanylate cyclase domain is found at 898 to 1028; the sequence is TVFFSDVVKF…DTVNTASRME (131 aa). Positions 1086–1122 are disordered; it reads ELRSISNRSTPPVTNDRWIPNPSSSHGSRPSSVYDPL. Residues 1088–1098 are compositionally biased toward polar residues; that stretch reads RSISNRSTPPV. Residues 1105–1117 show a composition bias toward low complexity; sequence PNPSSSHGSRPSS.

This sequence belongs to the adenylyl cyclase class-4/guanylyl cyclase family. As to expression, expressed predominantly in sensory neurons. Expressed asymmetrically in the right ASE (ASER) neuron and bilaterally in ASI and URX neurons. Expressed in PVT and bilaterally in AIY non-sensory neurons. Expressed in intestine.

It localises to the membrane. It catalyses the reaction GTP = 3',5'-cyclic GMP + diphosphate. In terms of biological role, guanylate cyclase involved in the production of the second messenger cGMP. Involved in the sensing of K+ gradient by the ASE right (ASER) sensory neuron. This is Receptor-type guanylate cyclase gcy-1 (gcy-1) from Caenorhabditis elegans.